Reading from the N-terminus, the 985-residue chain is MPESLIAGIPVHFPFEPYPVQRAYMEKVIHCLRDGTNGVLESPTGTGKTLSLLCSSLAWIRTRQSEHQKQMVKMEKADFSGLGGGAPGGDLSELAKTMGRANNWGVPKVIYASRTHSQLTQAMRELKRTAYANMRSVVLGSRDQLCIHPEVMREQGNSNKTNMCKLRVHSKTCSFQMRVESRKDHPDLRGPTIMDIEDLVKVGQRLKICPYFASRELVPQADITFMPYNYLLDPKARKANKIELGNTIVILDEAHNIEKICEESASVQIKSSDVAMAIEDVTHIMQVFASGESQDMAGDEPKDFTLDDLTLLKEMLLELEKAIDAIVVDNAVDGTTFPASMMYELLGKANFTYGNVATIVSLLDKLVQYLLVASQQMSIRKGGTFTLLSDLLTIVFANKEDVMSKVYASFKVHVLVEESKQGHGKQQGAKQQGGWLGKGTIAAATGLSKVAKIINFWCFNPGFGMEQLLNTQVRSVILTSGTLAPLKPLIAELAIPVAQHLENPHIVDQSQVYVKIIGTGPDRQQLISNYANRDNPKYISSLGQTILNVARIVPDGLLVFFPSYPMLNKCVDAWQASGLWADISCKKPIFLEPRSKDQFTSTMEEFYQAIRDSKGAVFMAVCRGKVSEGLDFADRNGRAVIITGLPFPPLKDPKVILKRRYLEANRTRENQLLSGQEWYNLDATRAVNQAIGRVIRHRNDYGAILLCDSRFKDASQVQQLSKWIRGHLGDRPQCSPFGPIVRELRQFFKNAEANMKLPDERETDSPLETVCKTEDEPLAAIPKVKREPGSNATFKSANESAIKVEMANSIKTWTPADYASAAGHKLGGAAPNAMDFMSRLDSNVSSIDFNCCTDSKSGSSGLVKIHKRERSSPTAPESSSQVTKKRYKLVENIKVEPSSSQAKEAPEERAAFLRELRSLVTQDQFRRFGKALLEYKNGTYESFQALMAILLDVLSAPKVRYMLVGMRKYLKNEHKDEFDRRVGNL.

In terms of domain architecture, Helicase ATP-binding spans 7–303 (AGIPVHFPFE…QDMAGDEPKD (297 aa)). Position 42-49 (42-49 (SPTGTGKT)) interacts with ATP. [4Fe-4S] cluster is bound by residues cysteine 146, cysteine 164, cysteine 173, and cysteine 209. The DEAH box signature appears at 252–255 (DEAH). Positions 863 to 883 (VKIHKRERSSPTAPESSSQVT) are disordered. A compositionally biased stretch (polar residues) spans 872–882 (SPTAPESSSQV). Threonine 874 is modified (phosphothreonine).

It belongs to the helicase family. RAD3/XPD subfamily. As to expression, expressed in both male germline and somatic cells (at protein level). Expressed in ovarian germline stem cells (at protein level). Expressed in adult testes (at protein level). Expressed in the germarium including germline stem cells.

Its subcellular location is the nucleus. The protein resides in the chromosome. The catalysed reaction is ATP + H2O = ADP + phosphate + H(+). In terms of biological role, a probable ATP-dependent DNA helicase implicated in DNA repair and the maintenance of genomic stability. Acts as an anti-recombinase to counteract toxic recombination and limit crossover during meiosis. Regulates meiotic recombination and crossover homeostasis by physically dissociating strand invasion events and thereby promotes noncrossover repair by meiotic synthesis dependent strand annealing (SDSA) as well as disassembly of D loop recombination intermediates. In male germline stem cells (GSCs), plays a role in GSCs maintenance during larval germline development by modulating the expression of genes such as Stat92E and preventing DNA damage-induced checkpoint activation. May play a role in female germline stem cell maintenance. This chain is Regulator of telomere elongation helicase 1 homolog, found in Drosophila melanogaster (Fruit fly).